The primary structure comprises 1574 residues: Sterol 3-beta-glucosyltransferase (1574 aa).

Residues 37–48 (TFLNQNPASPNN) are compositionally biased toward polar residues. 2 disordered regions span residues 37–61 (TFLN…NKDE) and 102–170 (ASNA…HSKL). 2 stretches are compositionally biased toward basic and acidic residues: residues 107 to 121 (EAKD…RSSR) and 128 to 138 (PEYRREYKLDY). The span at 139 to 148 (DIDESEEDDI) shows a compositional bias: acidic residues. The segment covering 149–170 (ESTRDENTLKPKTEDTSVHSKL) has biased composition (basic and acidic residues). One can recognise a GRAM 1 domain in the interval 253-288 (DKLKRVFELNDDDYFYGNYNVWLVRDVLLQGHIYLT). Positions 323-471 (DVIQSGSLGM…WVNNIVKVVF (149 aa)) constitute a PH domain. Disordered regions lie at residues 389–413 (GRND…SGDE), 538–559 (RMKK…GNEP), 651–722 (ASHR…PVQG), and 774–806 (DALS…KKKN). Residues 692-701 (ITPSKIFSNK) are compositionally biased toward polar residues. Basic and acidic residues predominate over residues 702–711 (SRTESEKSTP). Over residues 712–722 (DRSQTTSPVQG) the composition is skewed to polar residues. In terms of domain architecture, GRAM 2 spans 854–920 (RHFQERFSFN…IDVDTCSKEK (67 aa)). Basic and acidic residues predominate over residues 964-976 (RESGNESSDDNKS). The interval 964–996 (RESGNESSDDNKSAQHGKSGCFQKTPSSAETTK) is disordered. A compositionally biased stretch (polar residues) spans 985–996 (FQKTPSSAETTK). UDP-alpha-D-glucose contacts are provided by Ser1057, Arg1058, Asp1060, Asn1333, Ile1364, His1366, His1379, Ser1382, Gly1383, Thr1384, Asp1403, and Gln1404. Residues 1505–1574 (DSDTYDADHD…DNTTVTDANK (70 aa)) form a disordered region. The segment covering 1510 to 1533 (DADHDSDKESDHDQTYEQDNHSDY) has biased composition (basic and acidic residues). Residues 1563-1574 (GNDNTTVTDANK) show a composition bias toward polar residues.

It belongs to the glycosyltransferase 28 family.

The protein resides in the cytoplasm. Its subcellular location is the membrane. The catalysed reaction is a sterol + UDP-alpha-D-glucose = a sterol 3-beta-D-glucoside + UDP + H(+). It catalyses the reaction ergosterol + UDP-alpha-D-glucose = ergosteryl 3-beta-D-glucoside + UDP + H(+). Functionally, sterol glycosyltransferase responsible for the glycosylation of ergosterol to form ergosterol-glucoside. This chain is Sterol 3-beta-glucosyltransferase, found in Debaryomyces hansenii (strain ATCC 36239 / CBS 767 / BCRC 21394 / JCM 1990 / NBRC 0083 / IGC 2968) (Yeast).